The chain runs to 760 residues: 5-methyltetrahydropteroyltriglutamate--homocysteine methyltransferase (760 aa).

5-methyltetrahydropteroyltri-L-glutamate is bound by residues 17–20 (RELK) and Lys118. Residues 436-438 (IGS) and Glu489 contribute to the L-homocysteine site. Residues 436–438 (IGS) and Glu489 each bind L-methionine. 5-methyltetrahydropteroyltri-L-glutamate-binding positions include 520 to 521 (RC) and Trp566. Asp604 provides a ligand contact to L-homocysteine. Residue Asp604 participates in L-methionine binding. Glu610 contributes to the 5-methyltetrahydropteroyltri-L-glutamate binding site. His646, Cys648, and Glu670 together coordinate Zn(2+). The active-site Proton donor is the His699. Residue Cys731 coordinates Zn(2+).

The protein belongs to the vitamin-B12 independent methionine synthase family. It depends on Zn(2+) as a cofactor.

It catalyses the reaction 5-methyltetrahydropteroyltri-L-glutamate + L-homocysteine = tetrahydropteroyltri-L-glutamate + L-methionine. It functions in the pathway amino-acid biosynthesis; L-methionine biosynthesis via de novo pathway; L-methionine from L-homocysteine (MetE route): step 1/1. Its function is as follows. Catalyzes the transfer of a methyl group from 5-methyltetrahydrofolate to homocysteine resulting in methionine formation. The chain is 5-methyltetrahydropteroyltriglutamate--homocysteine methyltransferase from Vibrio parahaemolyticus serotype O3:K6 (strain RIMD 2210633).